The primary structure comprises 130 residues: Small ribosomal subunit protein uS8 (130 aa).

This sequence belongs to the universal ribosomal protein uS8 family. As to quaternary structure, part of the 30S ribosomal subunit.

Functionally, one of the primary rRNA binding proteins, it binds directly to 16S rRNA central domain where it helps coordinate assembly of the platform of the 30S subunit. The protein is Small ribosomal subunit protein uS8 of Methanoculleus marisnigri (strain ATCC 35101 / DSM 1498 / JR1).